A 669-amino-acid polypeptide reads, in one-letter code: Glycine--tRNA ligase beta subunit (669 aa).

This sequence belongs to the class-II aminoacyl-tRNA synthetase family. As to quaternary structure, tetramer of two alpha and two beta subunits.

It localises to the cytoplasm. It carries out the reaction tRNA(Gly) + glycine + ATP = glycyl-tRNA(Gly) + AMP + diphosphate. The protein is Glycine--tRNA ligase beta subunit of Phenylobacterium zucineum (strain HLK1).